Here is a 155-residue protein sequence, read N- to C-terminus: Probable adenylyl-sulfate kinase (155 aa).

Residue 9-16 participates in ATP binding; the sequence is GPSGAGKT. Serine 83 acts as the Phosphoserine intermediate in catalysis. A disordered region spans residues 134–155; the sequence is LDGEYEEPENPEVVVDTDKNDR.

It belongs to the APS kinase family.

The catalysed reaction is adenosine 5'-phosphosulfate + ATP = 3'-phosphoadenylyl sulfate + ADP + H(+). Its pathway is sulfur metabolism; hydrogen sulfide biosynthesis; sulfite from sulfate: step 2/3. In terms of biological role, catalyzes the synthesis of activated sulfate. In Archaeoglobus fulgidus (strain ATCC 49558 / DSM 4304 / JCM 9628 / NBRC 100126 / VC-16), this protein is Probable adenylyl-sulfate kinase (cysC).